The primary structure comprises 257 residues: Microfibril-associated glycoprotein 4 (257 aa).

Positions 1 to 22 (MKALPALPLMLMLLSMPPPCAP) are cleaved as a signal peptide. The Cell attachment site motif lies at 28 to 30 (RGD). The 224-residue stretch at 34 to 257 (KSCLQQPLDC…KRTEMKIRRA (224 aa)) folds into the Fibrinogen C-terminal domain. Residues Asn-89 and Asn-139 are each glycosylated (N-linked (GlcNAc...) asparagine).

In terms of assembly, homodimer. Can also form higher oligomers. Interacts with FBN1, FBN2 and LOX. Interacts with COL1A1 in a Ca (2+)-dependent manner. Interacts with ELN in a Ca (2+)-dependent manner; this interaction promotes ELN self-assembly.

Its subcellular location is the secreted. It localises to the extracellular space. It is found in the extracellular matrix. Functionally, could be involved in calcium-dependent cell adhesion or intercellular interactions. May contribute to the elastic fiber assembly and/or maintenance. This chain is Microfibril-associated glycoprotein 4 (Mfap4), found in Mus musculus (Mouse).